We begin with the raw amino-acid sequence, 647 residues long: Threonine--tRNA ligase (647 aa).

In terms of domain architecture, TGS spans 1–61 (MINITFPDGA…TEDGSIEIVT (61 aa)). Positions 242 to 540 (DHRKLGKELD…LIENYKGAFP (299 aa)) are catalytic. Zn(2+)-binding residues include Cys-336, His-387, and His-517.

Belongs to the class-II aminoacyl-tRNA synthetase family. In terms of assembly, homodimer. Zn(2+) serves as cofactor.

The protein localises to the cytoplasm. The catalysed reaction is tRNA(Thr) + L-threonine + ATP = L-threonyl-tRNA(Thr) + AMP + diphosphate + H(+). Functionally, catalyzes the attachment of threonine to tRNA(Thr) in a two-step reaction: L-threonine is first activated by ATP to form Thr-AMP and then transferred to the acceptor end of tRNA(Thr). Also edits incorrectly charged L-seryl-tRNA(Thr). This Streptococcus pneumoniae (strain P1031) protein is Threonine--tRNA ligase.